The following is a 326-amino-acid chain: Mitochondrial glycine transporter (326 aa).

Solcar repeat units follow at residues 45 to 134 (HPVI…SKQY), 141 to 225 (PTAL…TRAT), and 237 to 321 (LMPL…MMAK). The next 6 helical transmembrane spans lie at 51–76 (FLCG…TRLQ), 109–135 (GMSP…KQYF), 147–172 (VILG…TRYE), 200–223 (GLTA…SQTR), 241–267 (VNFS…KTHM), and 296–314 (GSVP…AWTV).

This sequence belongs to the mitochondrial carrier (TC 2.A.29) family. SLC25A38 subfamily.

It is found in the mitochondrion inner membrane. It catalyses the reaction glycine(in) = glycine(out). Functionally, mitochondrial glycine transporter that imports glycine into the mitochondrial matrix. Plays an important role in providing glycine for the first enzymatic step in heme biosynthesis, the condensation of glycine with succinyl-CoA to produce 5-aminolevulinate (ALA) in the mitochondrial matrix. Required during erythropoiesis. In terms of biological role, plays a role as pro-apoptotic protein that induces caspase-dependent apoptosis. This chain is Mitochondrial glycine transporter, found in Rattus norvegicus (Rat).